Consider the following 406-residue polypeptide: (R)-benzylsuccinyl-CoA dehydrogenase (406 aa).

This sequence belongs to the acyl-CoA dehydrogenase family. In terms of assembly, homotetramer. Requires FAD as cofactor.

The enzyme catalyses (R)-2-benzylsuccinyl-CoA + oxidized [electron-transfer flavoprotein] + H(+) = (E)-2-benzylidenesuccinyl-CoA + reduced [electron-transfer flavoprotein]. The protein operates within xenobiotic degradation; toluene degradation. Inhibited by (S)-benzylsuccinyl-CoA. Catalyzes the oxidation of benzylsuccinyl-CoA to benzylidenesuccinyl-CoA. This Thauera aromatica protein is (R)-benzylsuccinyl-CoA dehydrogenase (bbsG).